The chain runs to 490 residues: (21S)-21-acetyl-1-hydroxy-apo-melianone synthase CYP88A164 (490 aa).

The helical transmembrane segment at 4–24 (DLLWLILAIVVGTYVVLFGFL) threads the bilayer. Heme is bound at residue Cys-438.

It belongs to the cytochrome P450 family. Heme is required as a cofactor. Mainly expressed in petioles and, to a lower extent, in roots.

The protein localises to the membrane. The catalysed reaction is (21S)-21-acetoxyl-apo-melianone + reduced [NADPH--hemoprotein reductase] + O2 = (21S)-21-acetyl-1-hydroxy-apo-melianone + oxidized [NADPH--hemoprotein reductase] + H2O + H(+). It participates in secondary metabolite biosynthesis; terpenoid biosynthesis. In terms of biological role, monooxygenase involved in the biosynthesis of limonoids triterpene natural products such as azadirachtin, an antifeedant widely used as bioinsecticide, and possessing many medicinal applications including anti-tumoral, anti-malarial, anti-rheumatic, antibacterial, anti-inflammatory, anti-pyretic and diuretic effects. Catalyzes the conversion of (21S)-21-acetoxyl-apo-melianone to (21S)-21-acetyl-1-hydroxy-apo-melianone. This chain is (21S)-21-acetyl-1-hydroxy-apo-melianone synthase CYP88A164, found in Melia azedarach (Chinaberry tree).